A 544-amino-acid polypeptide reads, in one-letter code: Coiled-coil domain-containing protein 82 (544 aa).

Residues 1–14 (MIHVRRHETRRNSK) show a composition bias toward basic residues. Residues 1-294 (MIHVRRHETR…ESDEDGDDYI (294 aa)) are disordered. Basic and acidic residues predominate over residues 16–27 (HVPEQKSRVDWR). A compositionally biased stretch (acidic residues) spans 39–67 (DSDEELDSEEFDSDEELDSDESFENDEEL). Phosphoserine occurs at positions 88, 131, 154, 195, and 219. The segment covering 88–108 (SKIQSEGNDSKCLINSGNGST) has biased composition (polar residues). The segment covering 112-132 (ETNKIKHRNIDLQDQEKHLSQ) has biased composition (basic and acidic residues). The span at 223–248 (MEQKTPEKTLAAQKREKLQKLKELSK) shows a compositional bias: basic and acidic residues. At Thr227 the chain carries Phosphothreonine. A coiled-coil region spans residues 229–256 (EKTLAAQKREKLQKLKELSKQRSRQRRS). Acidic residues predominate over residues 273–294 (DEVDEEEEEDNYESDEDGDDYI). Position 329 is a phosphoserine (Ser329).

The sequence is that of Coiled-coil domain-containing protein 82 (CCDC82) from Homo sapiens (Human).